The sequence spans 417 residues: MSKLKITNVKTILTAPGGIDLAVVKVETNEPGLYGLGCATFTQRIFAVKSAIDEYMAPFLIGKDPTRIEDIWQSAAVSGYWRNGPIMNNALSGVDMALWDIKGKLAGMPVYELLGGKCRDGIPLYCHTDGGDEVEVEDNIRARMEEGYQYVRCQMGMYGGAGTDDLKLIATQLARAKNIQPKRSPRSKTPGIYFDPEAYAKSVPRLFEHLRNKLGFGIEFIHDVHERVTPVTAIQLAKTLEPYQLFYLEDPVAPENIDWLRMLRQQSSTPISMGELFVNINEWKPLIDNKLIDYIRCHVSTIGGITPAKKLAVYSELNGVRTAWHGPGDISPVGVCANMHLDMSSPNFGIQEYTPMNDALREVFPGCPEIDQGYAYVNDKPGLGIDINETLAEKYPCDGGIPSWTMARTPDGTASRP.

Histidine 127 is a substrate binding site. The Proton donor/acceptor role is filled by tyrosine 158. Aspartate 223 provides a ligand contact to Mg(2+). Histidine 225 acts as the Proton donor/acceptor in catalysis. Glutamate 249 and glutamate 275 together coordinate Mg(2+). Substrate contacts are provided by glutamate 275, arginine 296, histidine 325, aspartate 329, and glutamate 352.

It belongs to the mandelate racemase/muconate lactonizing enzyme family. GalD subfamily. Mg(2+) is required as a cofactor.

The enzyme catalyses D-mannonate = 2-dehydro-3-deoxy-D-gluconate + H2O. It carries out the reaction D-gluconate = 2-dehydro-3-deoxy-D-gluconate + H2O. Functionally, has low dehydratase activity with D-mannonate and D-gluconate, suggesting that these are not physiological substrates and that it has no significant role in the in vivo degradation of these compounds. Has no detectable activity with a panel of 70 other acid sugars (in vitro). The sequence is that of D-galactonate dehydratase family member Dd703_0947 from Musicola paradisiaca (strain Ech703) (Dickeya paradisiaca).